A 515-amino-acid chain; its full sequence is Fatty acyl-CoA reductase 2 (515 aa).

Topologically, residues 1 to 465 (MSMIAAFYGG…AKQHLKRLRN (465 aa)) are cytoplasmic. Residues 466–484 (IHYLFNTALFLIAWRLLIA) traverse the membrane as a helical segment. Residues 485-515 (RSQVARNVWFFIVSFCYKFLSYFRASSTLNV) lie on the Peroxisomal side of the membrane.

Belongs to the fatty acyl-CoA reductase family.

The protein localises to the peroxisome membrane. The enzyme catalyses a long-chain fatty acyl-CoA + 2 NADPH + 2 H(+) = a long-chain primary fatty alcohol + 2 NADP(+) + CoA. The catalysed reaction is hexadecanoyl-CoA + 2 NADPH + 2 H(+) = hexadecan-1-ol + 2 NADP(+) + CoA. It carries out the reaction octadecanoyl-CoA + 2 NADPH + 2 H(+) = octadecan-1-ol + 2 NADP(+) + CoA. It catalyses the reaction a very long-chain fatty acyl-CoA + 2 NADPH + 2 H(+) = a very long-chain primary fatty alcohol + 2 NADP(+) + CoA. The enzyme catalyses an ultra-long-chain fatty acyl-CoA + 2 NADPH + 2 H(+) = an ultra long-chain primary fatty alcohol + 2 NADP(+) + CoA. The catalysed reaction is eicosanoyl-CoA + 2 NADPH + 2 H(+) = eicosan-1-ol + 2 NADP(+) + CoA. It carries out the reaction docosanoyl-CoA + 2 NADPH + 2 H(+) = docosan-1-ol + 2 NADP(+) + CoA. It catalyses the reaction tetracosanoyl-CoA + 2 NADPH + 2 H(+) = tetracosan-1-ol + 2 NADP(+) + CoA. The enzyme catalyses hexacosanoyl-CoA + 2 NADPH + 2 H(+) = hexacosan-1-ol + 2 NADP(+) + CoA. The catalysed reaction is octacosanoyl-CoA + 2 NADPH + 2 H(+) = octacosan-1-ol + 2 NADP(+) + CoA. It carries out the reaction triacontanoyl-CoA + 2 NADPH + 2 H(+) = triacontan-1-ol + 2 NADP(+) + CoA. It catalyses the reaction 18-methylnonadecanoyl-CoA + 2 NADPH + 2 H(+) = 18-methylnonadecan-1-ol + 2 NADP(+) + CoA. The enzyme catalyses 20-methylheneicosanoyl-CoA + 2 NADPH + 2 H(+) = 20-methylheneicosan-1-ol + 2 NADP(+) + CoA. The catalysed reaction is 22-methyltricosanoyl-CoA + 2 NADPH + 2 H(+) = 22-methyltricosan-1-ol + 2 NADP(+) + CoA. It carries out the reaction 24-methylpentacosanoyl-CoA + 2 NADPH + 2 H(+) = 24-methylpentacosan-1-ol + 2 NADP(+) + CoA. In terms of biological role, catalyzes the reduction of saturated but not unsaturated C16 or C18 fatty acyl-CoA to fatty alcohols (FAls). A lower activity can be observed with shorter fatty acyl-CoA substrates. Can produce very long-chain and ultra long-chain FAls, regardless of whether they have a straight or branched chain. Involved in the production of ether lipids/plasmalogens and wax monoesters whose synthesis requires FAls as substrates. The polypeptide is Fatty acyl-CoA reductase 2 (Bos taurus (Bovine)).